A 191-amino-acid polypeptide reads, in one-letter code: Somatotropin (191 aa).

Zn(2+) is bound at residue His20. A disulfide bond links Cys53 and Cys164. A Zn(2+)-binding site is contributed by Glu173. Cysteines 181 and 189 form a disulfide.

It belongs to the somatotropin/prolactin family.

The protein resides in the secreted. Growth hormone plays an important role in growth control and is involved in the regulation of several anabolic processes. Implicated as an osmoregulatory substance important for seawater adaptation. The chain is Somatotropin (GH) from Chelonia mydas (Green sea-turtle).